The primary structure comprises 293 residues: Zinc metalloproteinase nas-2 (293 aa).

An N-terminal signal peptide occupies residues M1 to P17. A propeptide spanning residues K18–R67 is cleaved from the precursor. The region spanning R67 to K260 is the Peptidase M12A domain. An N-linked (GlcNAc...) asparagine glycan is attached at N111. Disulfide bonds link C114–C259 and C139–C169. H180 lines the Zn(2+) pocket. The active site involves E181. Residues H184 and H190 each coordinate Zn(2+). Residue N287 is glycosylated (N-linked (GlcNAc...) asparagine).

Zn(2+) is required as a cofactor.

The protein resides in the secreted. Metalloprotease. The chain is Zinc metalloproteinase nas-2 (nas-2) from Caenorhabditis elegans.